A 65-amino-acid chain; its full sequence is Sulfur carrier protein TtuB (65 aa).

Position 65 is a 1-thioglycine; alternate (glycine 65). A Glycyl adenylate; alternate modification is found at glycine 65. Glycine 65 is covalently cross-linked (Glycyl cysteine thioester (Gly-Cys) (interchain with C-192 in TtuC); alternate). Residue glycine 65 forms a Glycyl lysine isopeptide (Gly-Lys) (interchain with K-? in acceptor proteins); alternate linkage.

This sequence belongs to the TtuB family. In terms of assembly, is able to form a heterocomplex with TtuA. In terms of processing, the C-terminal glycine residue of TtuB is first activated by TtuC as an acyl-adenylate (TtuB-COAMP), and then converted to the thiocarboxylate form (TtuB-COSH) by the cysteine desulfurases IscS or SufS.

The protein operates within tRNA modification. Its function is as follows. Required for the 2-thiolation of 5-methyluridine residue at position 54 in the T loop of tRNAs, leading to 5-methyl-2-thiouridine (m(5)s(2)U or s(2)T). This modification allows thermal stabilization of tRNAs in thermophilic microorganisms, and is essential for cell growth at high temperatures. Thiocarboxylated TtuB functions as the sulfur donor in the sulfurtransferase reaction catalyzed by TtuA. TtuB also functions as a protein modifier covalently attached to lysine residues of the target proteins TtuA and TtuC. TtuB conjugation might play a regulatory role to ensure appropriate sulfur transfer in cells. This is Sulfur carrier protein TtuB from Thermus thermophilus (strain ATCC BAA-163 / DSM 7039 / HB27).